Reading from the N-terminus, the 158-residue chain is 2-C-methyl-D-erythritol 2,4-cyclodiphosphate synthase (158 aa).

The a divalent metal cation site is built by D8 and H10. 4-CDP-2-C-methyl-D-erythritol 2-phosphate-binding positions include 8 to 10 and 34 to 35; these read DVH and HS. H42 contributes to the a divalent metal cation binding site. 4-CDP-2-C-methyl-D-erythritol 2-phosphate contacts are provided by residues 56 to 58, 61 to 65, 100 to 106, 132 to 135, F139, and R142; these read DIG, FPDTD, AQRPKMA, and TTEE.

Belongs to the IspF family. In terms of assembly, homotrimer. It depends on a divalent metal cation as a cofactor.

The enzyme catalyses 4-CDP-2-C-methyl-D-erythritol 2-phosphate = 2-C-methyl-D-erythritol 2,4-cyclic diphosphate + CMP. Its pathway is isoprenoid biosynthesis; isopentenyl diphosphate biosynthesis via DXP pathway; isopentenyl diphosphate from 1-deoxy-D-xylulose 5-phosphate: step 4/6. Involved in the biosynthesis of isopentenyl diphosphate (IPP) and dimethylallyl diphosphate (DMAPP), two major building blocks of isoprenoid compounds. Catalyzes the conversion of 4-diphosphocytidyl-2-C-methyl-D-erythritol 2-phosphate (CDP-ME2P) to 2-C-methyl-D-erythritol 2,4-cyclodiphosphate (ME-CPP) with a corresponding release of cytidine 5-monophosphate (CMP). The protein is 2-C-methyl-D-erythritol 2,4-cyclodiphosphate synthase of Pelobacter propionicus (strain DSM 2379 / NBRC 103807 / OttBd1).